A 615-amino-acid chain; its full sequence is Putative DNA ligase 205R (615 aa).

The active-site N6-AMP-lysine intermediate is the K101.

The protein belongs to the NAD-dependent DNA ligase family.

The enzyme catalyses NAD(+) + (deoxyribonucleotide)n-3'-hydroxyl + 5'-phospho-(deoxyribonucleotide)m = (deoxyribonucleotide)n+m + AMP + beta-nicotinamide D-nucleotide.. In terms of biological role, catalyzes the formation of phosphodiester linkages between 5'-phosphoryl and 3'-hydroxyl groups in double-stranded DNA using NAD as a coenzyme and as the energy source for the reaction. In Invertebrate iridescent virus 6 (IIV-6), this protein is Putative DNA ligase 205R.